Here is a 115-residue protein sequence, read N- to C-terminus: U3-lycotoxin-Ls1a (115 aa).

The N-terminal stretch at 1 to 20 (MKFVLLFGVLLVTFFSYSSA) is a signal peptide. Residues 21-44 (EMLDDFDQADEDELLSLIEKGEAR) constitute a propeptide that is removed on maturation. Cystine bridges form between Cys-48-Cys-63, Cys-55-Cys-72, Cys-62-Cys-87, and Cys-74-Cys-85.

It belongs to the neurotoxin 19 (CSTX) family. 01 subfamily. As to expression, expressed by the venom gland.

The protein localises to the secreted. The sequence is that of U3-lycotoxin-Ls1a from Lycosa singoriensis (Wolf spider).